The sequence spans 78 residues: Beta-defensin 105 (78 aa).

Positions 1-27 (MALIRKTFYFLFAMFFILVQLPSGCQA) are cleaved as a signal peptide. Disulfide bonds link Cys-43–Cys-74, Cys-53–Cys-67, and Cys-57–Cys-73.

It belongs to the beta-defensin family. Specifically expressed in testis.

It localises to the secreted. Has antibacterial activity. This is Beta-defensin 105 (DEFB105A) from Homo sapiens (Human).